Here is a 255-residue protein sequence, read N- to C-terminus: tRNA (guanine-N(1)-)-methyltransferase (255 aa).

Residues Gly-113 and 133–138 (IGDYVL) contribute to the S-adenosyl-L-methionine site.

Belongs to the RNA methyltransferase TrmD family. In terms of assembly, homodimer.

The protein localises to the cytoplasm. The enzyme catalyses guanosine(37) in tRNA + S-adenosyl-L-methionine = N(1)-methylguanosine(37) in tRNA + S-adenosyl-L-homocysteine + H(+). Specifically methylates guanosine-37 in various tRNAs. In Shigella flexneri serotype 5b (strain 8401), this protein is tRNA (guanine-N(1)-)-methyltransferase.